The sequence spans 506 residues: Maturase K (506 aa).

The protein belongs to the intron maturase 2 family. MatK subfamily.

It localises to the plastid. It is found in the chloroplast. Functionally, usually encoded in the trnK tRNA gene intron. Probably assists in splicing its own and other chloroplast group II introns. The sequence is that of Maturase K from Manihot esculenta (Cassava).